Consider the following 216-residue polypeptide: Ribonuclease HII (216 aa).

The region spanning 28 to 216 (DIVCGVDEAG…PVRAALDLIR (189 aa)) is the RNase H type-2 domain. A divalent metal cation contacts are provided by Asp-34, Glu-35, and Asp-126.

This sequence belongs to the RNase HII family. Mn(2+) is required as a cofactor. Mg(2+) serves as cofactor.

It localises to the cytoplasm. The enzyme catalyses Endonucleolytic cleavage to 5'-phosphomonoester.. Endonuclease that specifically degrades the RNA of RNA-DNA hybrids. The polypeptide is Ribonuclease HII (Burkholderia vietnamiensis (strain G4 / LMG 22486) (Burkholderia cepacia (strain R1808))).